Reading from the N-terminus, the 582-residue chain is Potassium-transporting ATPase potassium-binding subunit (582 aa).

The next 11 membrane-spanning stretches (helical) occupy residues L6–Y26, I65–E85, L87–V107, G136–I156, V178–V198, L277–I297, L304–A324, G402–G422, A441–I461, I505–L525, and G546–V566.

It belongs to the KdpA family. In terms of assembly, the system is composed of three essential subunits: KdpA, KdpB and KdpC.

It is found in the cell inner membrane. Functionally, part of the high-affinity ATP-driven potassium transport (or Kdp) system, which catalyzes the hydrolysis of ATP coupled with the electrogenic transport of potassium into the cytoplasm. This subunit binds the periplasmic potassium ions and delivers the ions to the membrane domain of KdpB through an intramembrane tunnel. The polypeptide is Potassium-transporting ATPase potassium-binding subunit (Solidesulfovibrio magneticus (strain ATCC 700980 / DSM 13731 / RS-1) (Desulfovibrio magneticus)).